Reading from the N-terminus, the 318-residue chain is NADH-ubiquinone oxidoreductase chain 1 (318 aa).

The next 9 membrane-spanning stretches (helical) occupy residues 2-22 (FLMNILCLVIPILLAMAFLTL), 37-57 (PNIVGPYGLLQPIADAIKLFI), 69-89 (LMFTLAPTLAFTLALSLWIPM), 100-120 (LGVLFILALSSLAVYSILWSG), 136-156 (VAQTISYEVTLAIILLSVMMM), 171-191 (HMWLILPLWPLAMMWFISTLA), 231-251 (IIMMNALTATLFLGAFHNPLF), 253-273 (ELFTVNFITKTLILTAIFLWV), and 293-313 (FLPLTLALCMLHVSIPALSAG).

Belongs to the complex I subunit 1 family. Core subunit of respiratory chain NADH dehydrogenase (Complex I) which is composed of 45 different subunits.

The protein resides in the mitochondrion inner membrane. It carries out the reaction a ubiquinone + NADH + 5 H(+)(in) = a ubiquinol + NAD(+) + 4 H(+)(out). Its function is as follows. Core subunit of the mitochondrial membrane respiratory chain NADH dehydrogenase (Complex I) which catalyzes electron transfer from NADH through the respiratory chain, using ubiquinone as an electron acceptor. Essential for the catalytic activity and assembly of complex I. In Zaedyus pichiy (Pichi), this protein is NADH-ubiquinone oxidoreductase chain 1 (MT-ND1).